Reading from the N-terminus, the 431-residue chain is Nuclear receptor subfamily 1 group I member 2 (431 aa).

The nuclear receptor DNA-binding region spans 35–104; the sequence is LQICRVCGDK…RLRKCLESGM (70 aa). 2 NR C4-type zinc fingers span residues 38 to 58 and 74 to 99; these read CRVC…CEGC and CPFR…LRKC. Positions 63-89 match the Bipartite nuclear localization signal motif; the sequence is RRAMKRNVRLRCPFRKGTCEITRKTRR. The hinge stretch occupies residues 105-142; it reads KKEMIMSDAAVEQRRALIKRKKREKIEAPPPGGQGLTE. The NR LBD domain occupies 143–430; the sequence is EQQALIQELM…LMQELFSSTD (288 aa). Hyperforin-binding positions include S244 and 282–285; that span reads ILRF.

The protein belongs to the nuclear hormone receptor family. NR1 subfamily. As to quaternary structure, heterodimer with RXRA. Interacts with NCOA1. Interacts (via domain NR LBD) with CRY1 and CRY2 in a ligand-dependent manner.

It localises to the nucleus. Functionally, nuclear receptor that binds and is activated by a variety of endogenous and xenobiotic compounds. Transcription factor that activates the transcription of multiple genes involved in the metabolism and secretion of potentially harmful xenobiotics, endogenous compounds and drugs. Response to specific ligands is species-specific, due to differences in the ligand-binding domain. Binds to a response element in the promoters of the CYP3A4 and ABCB1/MDR1 genes. Activated by naturally occurring steroids such as pregnenolone and progesterone, the cholesterol metabolite 5-beta-cholestane-3-alpha,7-alpha,12-alpha-triol, synthetic glucocorticoids and antiglucocorticoids and 16-alpha-carbonitrile (PCN). This Mus musculus (Mouse) protein is Nuclear receptor subfamily 1 group I member 2 (Nr1i2).